Here is a 393-residue protein sequence, read N- to C-terminus: Zinc-regulated GTPase metalloprotein activator 1 (393 aa).

The short motif at 16-23 is the psi-PxLVp motif element; sequence EDCPELVP. 47-54 lines the GTP pocket; sequence GYLGAGKT. Zn(2+) is bound by residues C105, C107, and C108. The CXCC motif signature appears at 105–108; the sequence is CLCC. GTP contacts are provided by residues 108-112 and 201-204; these read CSVKD and NKTD. Residues 271 to 374 enclose the CobW C-terminal domain; sequence IVTVTFEVPG…VLQQLFLTAV (104 aa).

It belongs to the SIMIBI class G3E GTPase family. ZNG1 subfamily. Present at high level in the nuclei of the ureteric bud cells in the developing kidneys.

Its subcellular location is the nucleus. The enzyme catalyses GTP + H2O = GDP + phosphate + H(+). In terms of biological role, zinc chaperone that directly transfers zinc cofactor to target metalloproteins, thereby activating them. Catalyzes zinc insertion into the active site of methionine aminopeptidase METAP1, which function to cleave the initiator methionine from polypeptides during or after protein translation. Mechanistically, the N-terminal psi-PxLVp motif binds to the C6H2-type zinc finger of inactive form of METAP1. After formation of the docked complex, zinc is transferred from the CXCC motif in the GTPase domain of ZNG1 to the zinc binding site in the peptidase domain of METAP1 in a process requiring GTP hydrolysis. GTP/GDP exchange is required for release of active METAP1. The polypeptide is Zinc-regulated GTPase metalloprotein activator 1 (Zng1) (Mus musculus (Mouse)).